A 361-amino-acid chain; its full sequence is MISKEEILSIYEGYNKEEITIVTVGSHTSLHILKGAKLEGFSTAVITTKDRATPYKRFGVADKYIYVDNFSDISNEEIQKQLIEMNAIIIPHGSFIAYCGLDNLENNFKVPMFGNRQILRWEAERDLEGKLLKESGLRIPKKLNSPDEINCPVMVKFPGARGGRGYFPCSTTEEFWKKVEIFKERGILTDEDVGNAHIEEYVVGTNYCIHYFYSPLKNQVELMGIDSRYESNIDGIVRVPAKDQMELDINPSYVISGNFPVVIRESLLPQVFDMGDKLVAKAEEMVAPGMIGPFCLQSLCNDSLELVVFEMSARIDGGTNSFMNGSAYSCLYSGEPLSMGQRIAKEIKLALELDMMDKILY.

5-amino-1-(5-phospho-beta-D-ribosyl)imidazole-4-carboxamide contacts are provided by His27 and Ser94. The ATP-grasp domain occupies 116 to 348 (RQILRWEAER…MGQRIAKEIK (233 aa)). ATP-binding positions include 146-208 (PDEI…TNYC) and Glu230. Position 258 (Asn258) interacts with 5-amino-1-(5-phospho-beta-D-ribosyl)imidazole-4-carboxamide. 2 residues coordinate Mg(2+): Gln297 and Glu310.

This sequence belongs to the phosphohexose mutase family. Requires Mg(2+) as cofactor. Mn(2+) is required as a cofactor.

The enzyme catalyses 5-amino-1-(5-phospho-beta-D-ribosyl)imidazole-4-carboxamide + formate + ATP = 5-formamido-1-(5-phospho-D-ribosyl)imidazole-4-carboxamide + ADP + phosphate. The protein operates within purine metabolism; IMP biosynthesis via de novo pathway; 5-formamido-1-(5-phospho-D-ribosyl)imidazole-4-carboxamide from 5-amino-1-(5-phospho-D-ribosyl)imidazole-4-carboxamide (formate route): step 1/1. Functionally, catalyzes the ATP- and formate-dependent formylation of 5-aminoimidazole-4-carboxamide-1-beta-d-ribofuranosyl 5'-monophosphate (AICAR) to 5-formaminoimidazole-4-carboxamide-1-beta-d-ribofuranosyl 5'-monophosphate (FAICAR) in the absence of folates. This chain is 5-formaminoimidazole-4-carboxamide-1-(beta)-D-ribofuranosyl 5'-monophosphate synthetase, found in Methanococcus aeolicus (strain ATCC BAA-1280 / DSM 17508 / OCM 812 / Nankai-3).